Consider the following 511-residue polypeptide: Glucans biosynthesis protein G (511 aa).

An N-terminal signal peptide occupies residues 1–22; that stretch reads MMKMRWLSAAVMLTLYTSSSWA.

This sequence belongs to the OpgD/OpgG family.

The protein localises to the periplasm. It functions in the pathway glycan metabolism; osmoregulated periplasmic glucan (OPG) biosynthesis. Involved in the biosynthesis of osmoregulated periplasmic glucans (OPGs). This is Glucans biosynthesis protein G from Escherichia coli (strain K12 / MC4100 / BW2952).